Here is a 581-residue protein sequence, read N- to C-terminus: Sabinene synthase 1, chloroplastic (581 aa).

The N-terminal 28 residues, 1-28, are a transit peptide targeting the chloroplast; sequence MPLNSLHNLERKPSKAWSTSCTAPAARL. The (2E)-geranyl diphosphate site is built by R297, D334, D338, R475, and D478. 2 residues coordinate Mg(2+): D334 and D338. Positions 334 to 338 match the DDXXD motif motif; that stretch reads DDVYD. Positions 478, 482, and 486 each coordinate Mg(2+).

Belongs to the terpene synthase family. Tpsb subfamily. It depends on Mg(2+) as a cofactor. Mn(2+) is required as a cofactor.

It localises to the plastid. The protein resides in the chloroplast. It carries out the reaction (2E)-geranyl diphosphate = sabinene + diphosphate. The catalysed reaction is (2E)-geranyl diphosphate = beta-myrcene + diphosphate. It participates in secondary metabolite biosynthesis; terpenoid biosynthesis. In terms of biological role, monoterpene synthase (TPS) involved in the biosynthesis of monoterpene natural products, components of the chemical defense arsenal. Catalyzes the conversion of (2E)-geranyl diphosphate (GPP) into sabinene, and, as minor products, myrcene. The protein is Sabinene synthase 1, chloroplastic of Salvia pomifera (Apple sage).